Here is a 291-residue protein sequence, read N- to C-terminus: tRNA U34 carboxymethyltransferase (291 aa).

Carboxy-S-adenosyl-L-methionine is bound by residues lysine 61, tryptophan 75, lysine 80, glycine 100, 122–124, 149–150, tyrosine 169, and arginine 284; these read DPS and VE.

It belongs to the class I-like SAM-binding methyltransferase superfamily. CmoB family. As to quaternary structure, homotetramer.

It carries out the reaction carboxy-S-adenosyl-L-methionine + 5-hydroxyuridine(34) in tRNA = 5-carboxymethoxyuridine(34) in tRNA + S-adenosyl-L-homocysteine + H(+). Its function is as follows. Catalyzes carboxymethyl transfer from carboxy-S-adenosyl-L-methionine (Cx-SAM) to 5-hydroxyuridine (ho5U) to form 5-carboxymethoxyuridine (cmo5U) at position 34 in tRNAs. This chain is tRNA U34 carboxymethyltransferase, found in Campylobacter jejuni (strain RM1221).